The sequence spans 664 residues: tRNA (carboxymethyluridine(34)-5-O)-methyltransferase ALKBH8 (664 aa).

One can recognise an RRM domain in the interval Gln43–Val120. The Fe2OG dioxygenase domain occupies Lys220–Arg337. Asn227–Tyr229 contributes to the 2-oxoglutarate binding site. Residues His238 and Asp240 each contribute to the Fe cation site. His242 lines the Zn(2+) pocket. His292 contributes to the Fe cation binding site. Arg328 and Arg334 together coordinate 2-oxoglutarate. 3 residues coordinate Zn(2+): Cys341, Cys343, and Cys349. A methyltransferase domain region spans residues Ala411–Ala664. The interval Lys516–Asn575 is disordered. A compositionally biased stretch (polar residues) spans Asp552 to Asn575.

Belongs to the alkB family. In terms of assembly, interacts with TRMT112. It depends on Fe(2+) as a cofactor.

It localises to the cytoplasm. The protein localises to the nucleus. The enzyme catalyses 5-(carboxymethyl)uridine(34) in tRNA + S-adenosyl-L-methionine = 5-(2-methoxy-2-oxoethyl)uridine(34) in tRNA + S-adenosyl-L-homocysteine. Its function is as follows. Catalyzes the methylation of 5-carboxymethyl uridine to 5-methylcarboxymethyl uridine at the wobble position of the anticodon loop in tRNA via its methyltransferase domain. Catalyzes the last step in the formation of 5-methylcarboxymethyl uridine at the wobble position of the anticodon loop in target tRNA. Has a preference for tRNA(Arg) and tRNA(Glu), and does not bind tRNA(Lys). Binds tRNA and catalyzes the iron and alpha-ketoglutarate dependent hydroxylation of 5-methylcarboxymethyl uridine at the wobble position of the anticodon loop in tRNA via its dioxygenase domain, giving rise to 5-(S)-methoxycarbonylhydroxymethyluridine; has a preference for tRNA(Gly). Required for normal survival after DNA damage. May inhibit apoptosis and promote cell survival and angiogenesis. The chain is tRNA (carboxymethyluridine(34)-5-O)-methyltransferase ALKBH8 (ALKBH8) from Macaca fascicularis (Crab-eating macaque).